Here is a 272-residue protein sequence, read N- to C-terminus: Urease accessory protein UreD (272 aa).

This sequence belongs to the UreD family. In terms of assembly, ureD, UreF and UreG form a complex that acts as a GTP-hydrolysis-dependent molecular chaperone, activating the urease apoprotein by helping to assemble the nickel containing metallocenter of UreC. The UreE protein probably delivers the nickel.

It is found in the cytoplasm. Required for maturation of urease via the functional incorporation of the urease nickel metallocenter. The protein is Urease accessory protein UreD of Opitutus terrae (strain DSM 11246 / JCM 15787 / PB90-1).